The primary structure comprises 128 residues: Small ribosomal subunit protein eS8 (128 aa).

This sequence belongs to the eukaryotic ribosomal protein eS8 family. Part of the 30S ribosomal subunit.

The chain is Small ribosomal subunit protein eS8 from Methanococcus vannielii (strain ATCC 35089 / DSM 1224 / JCM 13029 / OCM 148 / SB).